The sequence spans 334 residues: Leucine-rich repeat-containing protein 39 (334 aa).

Positions 10 to 47 (AVNAVKEVWEKRIKKLNEDLKREKEFQQKLVRIWEERV) form a coiled coil. 9 LRR repeats span residues 84–105 (QLQE…IGRF), 107–128 (NLIV…IGLL), 130–151 (RLQE…LSYC), 153–176 (SLEK…SNLL), 177–198 (KLTH…VLNM), 200–221 (ALEW…IERM), 223–244 (NLHT…ISSM), 246–267 (NLST…MEKM), and 269–290 (NLRF…PPSE).

As to quaternary structure, interacts with MYH7 (via C-terminus).

It localises to the cytoplasm. Its subcellular location is the myofibril. It is found in the sarcomere. The protein resides in the m line. Its function is as follows. Component of the sarcomeric M-band which plays a role in myocyte response to biomechanical stress. May regulate expression of other M-band proteins via an SRF-dependent pathway. Important for normal contractile function in heart. This is Leucine-rich repeat-containing protein 39 from Bos taurus (Bovine).